A 107-amino-acid chain; its full sequence is RNA silencing suppressor (107 aa).

Residues 46–49 (RRRR) form a basic region. A C4-type zinc finger spans residues 56 to 78 (CHRCYRVYPPLFPEISRCDNRTC).

This sequence belongs to the carlaviruses nucleic acid-binding protein family.

Suppressor of viral-induced RNA silencing. The potential mechanism of action is based on sequestering siRNAs. The protein is RNA silencing suppressor of Chrysanthemum morifolium (Florist's daisy).